Consider the following 945-residue polypeptide: Bifunctional glutamine synthetase adenylyltransferase/adenylyl-removing enzyme (945 aa).

The adenylyl removase stretch occupies residues 1-440; the sequence is MMPLSPQLQQ…VFNELIGDDE (440 aa). The adenylyl transferase stretch occupies residues 449-945; sequence AEYWRELWQD…SASWQKWLMA (497 aa).

It belongs to the GlnE family. The cofactor is Mg(2+).

The enzyme catalyses [glutamine synthetase]-O(4)-(5'-adenylyl)-L-tyrosine + phosphate = [glutamine synthetase]-L-tyrosine + ADP. It carries out the reaction [glutamine synthetase]-L-tyrosine + ATP = [glutamine synthetase]-O(4)-(5'-adenylyl)-L-tyrosine + diphosphate. Involved in the regulation of glutamine synthetase GlnA, a key enzyme in the process to assimilate ammonia. When cellular nitrogen levels are high, the C-terminal adenylyl transferase (AT) inactivates GlnA by covalent transfer of an adenylyl group from ATP to specific tyrosine residue of GlnA, thus reducing its activity. Conversely, when nitrogen levels are low, the N-terminal adenylyl removase (AR) activates GlnA by removing the adenylyl group by phosphorolysis, increasing its activity. The regulatory region of GlnE binds the signal transduction protein PII (GlnB) which indicates the nitrogen status of the cell. The sequence is that of Bifunctional glutamine synthetase adenylyltransferase/adenylyl-removing enzyme from Klebsiella pneumoniae subsp. pneumoniae (strain ATCC 700721 / MGH 78578).